The primary structure comprises 306 residues: Low-density lipoprotein receptor class A domain-containing protein 4 (306 aa).

Topologically, residues 1–64 (MPEAGFQATN…PPGIFNSELE (64 aa)) are lumenal. The LDL-receptor class A domain maps to 11–48 (AFTECKFTCTSGKCLYLGSLVCNQQNDCGDNSDEENCL). Cystine bridges form between cysteine 19-cysteine 38 and cysteine 32-cysteine 47. A helical transmembrane segment spans residues 65–85 (FAQILIIVVVVTVMVVVVVCL). The Cytoplasmic portion of the chain corresponds to 86-306 (LNHYKVSTRS…GKDRKPGDLV (221 aa)). The segment at 100-127 (PNQSQRQEDGLQPEGSLWPSDSSVQRPG) is disordered. The PPxY motif 1 motif lies at 180–183 (PPPY). Positions 208-211 (PPNR) match the SMAD interaction motif (SIM) motif. Positions 252 to 255 (PPTY) match the PPxY motif 2 motif. Residues 268-306 (FHHQHSNTHRGSRPQFQPNNSEGTIVPIKGKDRKPGDLV) form a disordered region. A compositionally biased stretch (basic residues) spans 269–279 (HHQHSNTHRGS). Residues 281 to 290 (PQFQPNNSEG) are compositionally biased toward polar residues. The span at 296 to 306 (KGKDRKPGDLV) shows a compositional bias: basic and acidic residues.

Belongs to the PMEPA1 family. As to quaternary structure, interacts with PMEPA1. Interacts (via the SMAD interaction motif) with SMAD2 and SMAD3. Detected in all tissues tested.

It localises to the early endosome membrane. In terms of biological role, functions as a negative regulator of TGF-beta signaling and thereby probably plays a role in cell proliferation, differentiation, apoptosis, motility, extracellular matrix production and immunosuppression. In the canonical TGF-beta pathway, ZFYVE9/SARA recruits the intracellular signal transducer and transcriptional modulators SMAD2 and SMAD3 to the TGF-beta receptor. Phosphorylated by the receptor, SMAD2 and SMAD3 then form a heteromeric complex with SMAD4 that translocates to the nucleus to regulate transcription. Through interaction with SMAD2 and SMAD3, LDLRAD4 may compete with ZFYVE9 and SMAD4 and prevent propagation of the intracellular signal. The sequence is that of Low-density lipoprotein receptor class A domain-containing protein 4 (Ldlrad4) from Mus musculus (Mouse).